Consider the following 599-residue polypeptide: Putative clathrin assembly protein At1g03050 (599 aa).

Residues 26–162 (GRSASLSELD…DFRMQARHGK (137 aa)) form the ENTH domain. 2 disordered regions span residues 332-382 (KQSK…PEEE) and 580-599 (QGHM…TPQY). Composition is skewed to acidic residues over residues 341–359 (ADED…EQED) and 373–382 (EEDDVKPEEE). A compositionally biased stretch (polar residues) spans 585-599 (LRQNQNQPYSYTPQY).

Its subcellular location is the membrane. The protein resides in the clathrin-coated pit. The protein localises to the golgi apparatus. It is found in the cytoplasmic vesicle. It localises to the clathrin-coated vesicle. In Arabidopsis thaliana (Mouse-ear cress), this protein is Putative clathrin assembly protein At1g03050.